We begin with the raw amino-acid sequence, 605 residues long: Ras guanine nucleotide exchange factor A (605 aa).

One can recognise a LisH domain in the interval 67-99 (DKTAIIQLILQHLSTKGLKQTKQTLEKEARTTT). Residues 198-320 (DDEVVKFASL…SLTKMVEKLS (123 aa)) form the N-terminal Ras-GEF domain. Positions 353–597 (DEEEIARQLT…YRESLKREPK (245 aa)) constitute a Ras-GEF domain.

Component of the Sca1 complex composed of at least gefA, gefH, scaA, phr, and the protein phosphatase 2A subunits pppA and pho2B. Interacts directly with gefH.

It localises to the cell membrane. Functionally, ras-bound GDP/GTP exchange factor required for normal activation of adenylyl cyclase. Component of the Sca1 complex, a regulator of cell motility, chemotaxis and signal relay. The Sca1 complex is recruited to the plasma membrane in a chemoattractant- and F-actin-dependent manner and is enriched at the leading edge of chemotaxing cells where it regulates F-actin dynamics and signal relay by controlling the activation of rasC and the downstream target of rapamycin complex 2 (TORC2)-Akt/protein kinase B (PKB) pathway. This Dictyostelium discoideum (Social amoeba) protein is Ras guanine nucleotide exchange factor A (gefA).